Consider the following 260-residue polypeptide: Adenosylcobinamide-GDP ribazoletransferase (260 aa).

A run of 6 helical transmembrane segments spans residues 43-63 (LVGT…QFIF), 64-84 (PASV…GGFH), 117-137 (GSLA…ELAL), 143-163 (VAGG…SIIF), 197-217 (VICL…TLFV), and 237-257 (TLGA…LLLW).

The protein belongs to the CobS family. Mg(2+) serves as cofactor.

It localises to the cell inner membrane. It catalyses the reaction alpha-ribazole + adenosylcob(III)inamide-GDP = adenosylcob(III)alamin + GMP + H(+). The catalysed reaction is alpha-ribazole 5'-phosphate + adenosylcob(III)inamide-GDP = adenosylcob(III)alamin 5'-phosphate + GMP + H(+). The protein operates within cofactor biosynthesis; adenosylcobalamin biosynthesis; adenosylcobalamin from cob(II)yrinate a,c-diamide: step 7/7. Its function is as follows. Joins adenosylcobinamide-GDP and alpha-ribazole to generate adenosylcobalamin (Ado-cobalamin). Also synthesizes adenosylcobalamin 5'-phosphate from adenosylcobinamide-GDP and alpha-ribazole 5'-phosphate. This Shewanella amazonensis (strain ATCC BAA-1098 / SB2B) protein is Adenosylcobinamide-GDP ribazoletransferase.